The sequence spans 435 residues: GTPase Der (435 aa).

EngA-type G domains follow at residues 4–167 and 175–350; these read PVVA…PAEK and ISFS…DNQN. GTP-binding positions include 10-17, 57-61, 119-122, 181-188, 228-232, and 293-296; these read GQPNVGKS, DTGGI, NKAD, GRPNVGKS, DTAGI, and NKWD. Positions 351 to 435 constitute a KH-like domain; the sequence is QRIQSSVLND…PIKILPRKRK (85 aa).

This sequence belongs to the TRAFAC class TrmE-Era-EngA-EngB-Septin-like GTPase superfamily. EngA (Der) GTPase family. Associates with the 50S ribosomal subunit.

In terms of biological role, GTPase that plays an essential role in the late steps of ribosome biogenesis. This Lactobacillus helveticus (strain DPC 4571) protein is GTPase Der.